A 180-amino-acid polypeptide reads, in one-letter code: Inner membrane-spanning protein YciB (180 aa).

5 helical membrane passes run 25 to 45, 54 to 74, 76 to 96, 118 to 138, and 150 to 170; these read QNAT…CYFV, IISV…GNSI, IKIK…MSGI, ITLS…NEIV, and FKVF…LPLL.

This sequence belongs to the YciB family.

The protein resides in the cell inner membrane. Plays a role in cell envelope biogenesis, maintenance of cell envelope integrity and membrane homeostasis. The polypeptide is Inner membrane-spanning protein YciB (Rickettsia canadensis (strain McKiel)).